A 100-amino-acid chain; its full sequence is uncharacterized protein (100 aa).

This is an uncharacterized protein from Rhizobium leguminosarum bv. phaseoli.